A 374-amino-acid chain; its full sequence is tRNA-specific 2-thiouridylase MnmA (374 aa).

Residues 12–19 and methionine 38 each bind ATP; that span reads GMSGGVDS. Residues 98–100 form an interaction with target base in tRNA region; that stretch reads NPD. Cysteine 103 functions as the Nucleophile in the catalytic mechanism. A disulfide bond links cysteine 103 and cysteine 200. Position 127 (glycine 127) interacts with ATP. The interval 150-152 is interaction with tRNA; it reads KDQ. Cysteine 200 serves as the catalytic Cysteine persulfide intermediate. The segment at 311-312 is interaction with tRNA; sequence RY.

Belongs to the MnmA/TRMU family.

The protein localises to the cytoplasm. It catalyses the reaction S-sulfanyl-L-cysteinyl-[protein] + uridine(34) in tRNA + AH2 + ATP = 2-thiouridine(34) in tRNA + L-cysteinyl-[protein] + A + AMP + diphosphate + H(+). In terms of biological role, catalyzes the 2-thiolation of uridine at the wobble position (U34) of tRNA, leading to the formation of s(2)U34. The protein is tRNA-specific 2-thiouridylase MnmA of Lactiplantibacillus plantarum (strain ATCC BAA-793 / NCIMB 8826 / WCFS1) (Lactobacillus plantarum).